The chain runs to 599 residues: Prostaglandin G/H synthase 1 (599 aa).

A signal peptide spans 1–23 (MSRSLLLWFLLFLLLLPPLPVLL). An EGF-like domain is found at 31–69 (PVNPCCYYPCQHQGICVRFGLDRYQCDCTRTGYSGPNCT). 4 cysteine pairs are disulfide-bonded: Cys-35–Cys-46, Cys-36–Cys-158, Cys-40–Cys-56, and Cys-58–Cys-68. Asn-67, Asn-103, and Asn-143 each carry an N-linked (GlcNAc...) asparagine glycan. The active-site Proton acceptor is His-206. Catalysis depends on Tyr-384, which acts as the For cyclooxygenase activity. His-387 provides a ligand contact to heme b. Cys-568 and Cys-574 are oxidised to a cystine.

It belongs to the prostaglandin G/H synthase family. In terms of assembly, homodimer. Heme b serves as cofactor.

Its subcellular location is the microsome membrane. The protein resides in the endoplasmic reticulum membrane. The enzyme catalyses (5Z,8Z,11Z,14Z)-eicosatetraenoate + AH2 + 2 O2 = prostaglandin H2 + A + H2O. It catalyses the reaction (5Z,8Z,11Z,14Z)-eicosatetraenoate + 2 O2 = prostaglandin G2. The catalysed reaction is prostaglandin G2 + AH2 = prostaglandin H2 + A + H2O. It carries out the reaction (9Z,12Z)-octadecadienoate + AH2 + O2 = (9R)-hydroxy-(10E,12Z)-octadecadienoate + A + H2O. The enzyme catalyses (9Z,12Z)-octadecadienoate + AH2 + O2 = (9S)-hydroxy-(10E,12Z)-octadecadienoate + A + H2O. It catalyses the reaction (9Z,12Z)-octadecadienoate + AH2 + O2 = (13S)-hydroxy-(9Z,11E)-octadecadienoate + A + H2O. The catalysed reaction is (9Z,12Z)-octadecadienoate + AH2 + O2 = (13R)-hydroxy-(9Z,11E)-octadecadienoate + A + H2O. It functions in the pathway lipid metabolism; prostaglandin biosynthesis. With respect to regulation, the cyclooxygenase activity is inhibited by nonsteroidal anti-inflammatory drugs (NSAIDs) including ibuprofen, flurbiprofen, ketoprofen, naproxen, flurbiprofen, anirolac, fenclofenac and diclofenac. Functionally, dual cyclooxygenase and peroxidase that plays an important role in the biosynthesis pathway of prostanoids, a class of C20 oxylipins mainly derived from arachidonate ((5Z,8Z,11Z,14Z)-eicosatetraenoate, AA, C20:4(n-6)), with a particular role in the inflammatory response. The cyclooxygenase activity oxygenates AA to the hydroperoxy endoperoxide prostaglandin G2 (PGG2), and the peroxidase activity reduces PGG2 to the hydroxy endoperoxide prostaglandin H2 (PGH2), the precursor of all 2-series prostaglandins and thromboxanes. This complex transformation is initiated by abstraction of hydrogen at carbon 13 (with S-stereochemistry), followed by insertion of molecular O2 to form the endoperoxide bridge between carbon 9 and 11 that defines prostaglandins. The insertion of a second molecule of O2 (bis-oxygenase activity) yields a hydroperoxy group in PGG2 that is then reduced to PGH2 by two electrons. Involved in the constitutive production of prostanoids in particular in the stomach and platelets. In gastric epithelial cells, it is a key step in the generation of prostaglandins, such as prostaglandin E2 (PGE2), which plays an important role in cytoprotection. In platelets, it is involved in the generation of thromboxane A2 (TXA2), which promotes platelet activation and aggregation, vasoconstriction and proliferation of vascular smooth muscle cells. Can also use linoleate (LA, (9Z,12Z)-octadecadienoate, C18:2(n-6)) as substrate and produce hydroxyoctadecadienoates (HODEs) in a regio- and stereospecific manner, being (9R)-HODE ((9R)-hydroxy-(10E,12Z)-octadecadienoate) and (13S)-HODE ((13S)-hydroxy-(9Z,11E)-octadecadienoate) its major products. In Homo sapiens (Human), this protein is Prostaglandin G/H synthase 1.